Here is a 532-residue protein sequence, read N- to C-terminus: Metal-staphylopine-binding protein CntA (532 aa).

The signal sequence occupies residues M1–G20. C21 carries N-palmitoyl cysteine lipidation. C21 carries the S-diacylglycerol cysteine lipid modification. Residues R165, R418, and N448 each coordinate staphylopine.

This sequence belongs to the bacterial solute-binding protein 5 family. The complex is composed of two ATP-binding proteins (CntD and CntF), two transmembrane proteins (CntB and CntC) and a solute-binding protein (CntA).

Its subcellular location is the cell membrane. In terms of biological role, part of the ABC transporter complex CntABCDF (Opp1) involved in the uptake of metal in complex with the metallophore staphylopine (StP). May be involved in the import of a large array of divalent metals ions such as nickel, cobalt, zinc, copper and iron. Binds the metal via the metallophore StP, and transfers the StP-metal complex to the membrane-bound permease. This Staphylococcus aureus (strain Mu50 / ATCC 700699) protein is Metal-staphylopine-binding protein CntA.